The sequence spans 251 residues: MTQQSKETTDFGFQTVDKDEKQTMVAKVFHSVASKYDLMNDLMSFGIHRVWKRYTIEASGVRRNQRVLDLAGGTGDLTAKFSRLVGENGEVVLADINDSMLKMGREKLRDHGIVGNVSYVQANAEELPFPDDYFDCITISFGLRNVTDKAKALRSMFRVLKPGGRLLVLEFSKPVLDPLSKIYDAYSFHILPRIGQVIVNDADSYRYLTESIRMHPDQETLKGMMEEAGFDQVSYTNMTGGIVALHKGFKF.

S-adenosyl-L-methionine-binding positions include T74, D95, 123-124 (NA), and S140.

It belongs to the class I-like SAM-binding methyltransferase superfamily. MenG/UbiE family.

The enzyme catalyses a 2-demethylmenaquinol + S-adenosyl-L-methionine = a menaquinol + S-adenosyl-L-homocysteine + H(+). The catalysed reaction is a 2-methoxy-6-(all-trans-polyprenyl)benzene-1,4-diol + S-adenosyl-L-methionine = a 5-methoxy-2-methyl-3-(all-trans-polyprenyl)benzene-1,4-diol + S-adenosyl-L-homocysteine + H(+). The protein operates within quinol/quinone metabolism; menaquinone biosynthesis; menaquinol from 1,4-dihydroxy-2-naphthoate: step 2/2. Its pathway is cofactor biosynthesis; ubiquinone biosynthesis. In terms of biological role, methyltransferase required for the conversion of demethylmenaquinol (DMKH2) to menaquinol (MKH2) and the conversion of 2-polyprenyl-6-methoxy-1,4-benzoquinol (DDMQH2) to 2-polyprenyl-3-methyl-6-methoxy-1,4-benzoquinol (DMQH2). The protein is Ubiquinone/menaquinone biosynthesis C-methyltransferase UbiE of Proteus mirabilis (strain HI4320).